Here is a 475-residue protein sequence, read N- to C-terminus: Ribulose bisphosphate carboxylase large chain (475 aa).

A propeptide spanning residues 1–2 is cleaved from the precursor; it reads MS. Pro-3 carries the post-translational modification N-acetylproline. Residue Lys-14 is modified to N6,N6,N6-trimethyllysine. Residues Asn-123 and Thr-173 each contribute to the substrate site. The active-site Proton acceptor is Lys-175. Lys-177 is a substrate binding site. 3 residues coordinate Mg(2+): Lys-201, Asp-203, and Glu-204. Lys-201 carries the N6-carboxylysine modification. The Proton acceptor role is filled by His-294. The substrate site is built by Arg-295, His-327, and Ser-379.

Belongs to the RuBisCO large chain family. Type I subfamily. In terms of assembly, heterohexadecamer of 8 large chains and 8 small chains. The cofactor is Mg(2+).

It is found in the plastid. It localises to the chloroplast. It catalyses the reaction 2 (2R)-3-phosphoglycerate + 2 H(+) = D-ribulose 1,5-bisphosphate + CO2 + H2O. The catalysed reaction is D-ribulose 1,5-bisphosphate + O2 = 2-phosphoglycolate + (2R)-3-phosphoglycerate + 2 H(+). In terms of biological role, ruBisCO catalyzes two reactions: the carboxylation of D-ribulose 1,5-bisphosphate, the primary event in carbon dioxide fixation, as well as the oxidative fragmentation of the pentose substrate in the photorespiration process. Both reactions occur simultaneously and in competition at the same active site. The chain is Ribulose bisphosphate carboxylase large chain from Nymphaea alba (White water-lily).